Reading from the N-terminus, the 216-residue chain is LexA repressor (216 aa).

The segment at residues 28-48 (RAEIAAEFGFSSPNAAEEHLR) is a DNA-binding region (H-T-H motif). Active-site for autocatalytic cleavage activity residues include serine 134 and lysine 171.

The protein belongs to the peptidase S24 family. Homodimer.

The enzyme catalyses Hydrolysis of Ala-|-Gly bond in repressor LexA.. Functionally, represses a number of genes involved in the response to DNA damage (SOS response), including recA and lexA. In the presence of single-stranded DNA, RecA interacts with LexA causing an autocatalytic cleavage which disrupts the DNA-binding part of LexA, leading to derepression of the SOS regulon and eventually DNA repair. This is LexA repressor from Ralstonia pickettii (strain 12J).